The following is an 88-amino-acid chain: Large ribosomal subunit protein eL37 (88 aa).

Positions 1-24 are disordered; sequence MTKGTTSFGKRHNKSHTQCRRCGR. The segment covering 9-24 has biased composition (basic residues); sequence GKRHNKSHTQCRRCGR. Zn(2+) is bound by residues Cys-19, Cys-22, Cys-34, and Cys-37. A C4-type zinc finger spans residues 19–37; sequence CRRCGRKSYHIQKKTCSSC.

It belongs to the eukaryotic ribosomal protein eL37 family. It depends on Zn(2+) as a cofactor.

Binds to the 23S rRNA. The sequence is that of Large ribosomal subunit protein eL37 (RPL37) from Schistosoma mansoni (Blood fluke).